The primary structure comprises 101 residues: NADH-quinone oxidoreductase subunit K (101 aa).

Transmembrane regions (helical) follow at residues 4–24, 30–50, and 61–81; these read LSHY…GIFL, IVLL…FIAF, and IFVF…LAIL.

It belongs to the complex I subunit 4L family. In terms of assembly, NDH-1 is composed of 14 different subunits. Subunits NuoA, H, J, K, L, M, N constitute the membrane sector of the complex.

The protein localises to the cell inner membrane. It carries out the reaction a quinone + NADH + 5 H(+)(in) = a quinol + NAD(+) + 4 H(+)(out). In terms of biological role, NDH-1 shuttles electrons from NADH, via FMN and iron-sulfur (Fe-S) centers, to quinones in the respiratory chain. The immediate electron acceptor for the enzyme in this species is believed to be ubiquinone. Couples the redox reaction to proton translocation (for every two electrons transferred, four hydrogen ions are translocated across the cytoplasmic membrane), and thus conserves the redox energy in a proton gradient. This is NADH-quinone oxidoreductase subunit K from Aromatoleum aromaticum (strain DSM 19018 / LMG 30748 / EbN1) (Azoarcus sp. (strain EbN1)).